Reading from the N-terminus, the 398-residue chain is Bifunctional enzyme IspD/IspF (398 aa).

A 2-C-methyl-D-erythritol 4-phosphate cytidylyltransferase region spans residues Met1–Ile237. The interval Arg238 to Gln398 is 2-C-methyl-D-erythritol 2,4-cyclodiphosphate synthase. Positions 244 and 246 each coordinate a divalent metal cation. 4-CDP-2-C-methyl-D-erythritol 2-phosphate-binding positions include Asp244–His246 and His270–Ser271. His278 serves as a coordination point for a divalent metal cation. Residues Asp292 to Gly294, Thr368 to Glu371, Phe375, and Arg378 contribute to the 4-CDP-2-C-methyl-D-erythritol 2-phosphate site.

The protein in the N-terminal section; belongs to the IspD/TarI cytidylyltransferase family. IspD subfamily. This sequence in the C-terminal section; belongs to the IspF family. The cofactor is a divalent metal cation.

It catalyses the reaction 2-C-methyl-D-erythritol 4-phosphate + CTP + H(+) = 4-CDP-2-C-methyl-D-erythritol + diphosphate. It carries out the reaction 4-CDP-2-C-methyl-D-erythritol 2-phosphate = 2-C-methyl-D-erythritol 2,4-cyclic diphosphate + CMP. Its pathway is isoprenoid biosynthesis; isopentenyl diphosphate biosynthesis via DXP pathway; isopentenyl diphosphate from 1-deoxy-D-xylulose 5-phosphate: step 2/6. The protein operates within isoprenoid biosynthesis; isopentenyl diphosphate biosynthesis via DXP pathway; isopentenyl diphosphate from 1-deoxy-D-xylulose 5-phosphate: step 4/6. Its function is as follows. Bifunctional enzyme that catalyzes the formation of 4-diphosphocytidyl-2-C-methyl-D-erythritol from CTP and 2-C-methyl-D-erythritol 4-phosphate (MEP) (IspD), and catalyzes the conversion of 4-diphosphocytidyl-2-C-methyl-D-erythritol 2-phosphate (CDP-ME2P) to 2-C-methyl-D-erythritol 2,4-cyclodiphosphate (ME-CPP) with a corresponding release of cytidine 5-monophosphate (CMP) (IspF). The polypeptide is Bifunctional enzyme IspD/IspF (Bartonella tribocorum (strain CIP 105476 / IBS 506)).